The sequence spans 298 residues: UDP-N-acetylenolpyruvoylglucosamine reductase (298 aa).

One can recognise an FAD-binding PCMH-type domain in the interval 26-191 (KTGGPADWLA…LDATFALEPG (166 aa)). Arg170 is a catalytic residue. Residue Ser220 is the Proton donor of the active site. Glu290 is an active-site residue.

Belongs to the MurB family. The cofactor is FAD.

The protein localises to the cytoplasm. It catalyses the reaction UDP-N-acetyl-alpha-D-muramate + NADP(+) = UDP-N-acetyl-3-O-(1-carboxyvinyl)-alpha-D-glucosamine + NADPH + H(+). It functions in the pathway cell wall biogenesis; peptidoglycan biosynthesis. In terms of biological role, cell wall formation. The polypeptide is UDP-N-acetylenolpyruvoylglucosamine reductase (Limosilactobacillus reuteri subsp. reuteri (strain JCM 1112) (Lactobacillus reuteri)).